A 79-amino-acid polypeptide reads, in one-letter code: Calcium/calmodulin-dependent protein kinase II inhibitor 2 (79 aa).

Positions 43–69 are inhibitory domain; it reads KRPPKLGQIGRAKRVVIEDDRIDEVLK.

This sequence belongs to the CAMK2N family.

Its subcellular location is the nucleus. The protein localises to the cytoplasm. The protein resides in the cytosol. In terms of biological role, potent and specific cellular inhibitor of CaM-kinase II (CAMK2). Traps Ca(2+)/calmodulin on CAMK2. The chain is Calcium/calmodulin-dependent protein kinase II inhibitor 2 (camk2n2) from Xenopus laevis (African clawed frog).